Here is a 34-residue protein sequence, read N- to C-terminus: Aspartate aminotransferase 2 (34 aa).

This sequence belongs to the class-I pyridoxal-phosphate-dependent aminotransferase family. In terms of assembly, homodimer. Pyridoxal 5'-phosphate serves as cofactor.

The enzyme catalyses L-aspartate + 2-oxoglutarate = oxaloacetate + L-glutamate. Functionally, important for the metabolism of amino acids and Krebs-cycle related organic acids. In plants, it is involved in nitrogen metabolism and in aspects of carbon and energy metabolism. The protein is Aspartate aminotransferase 2 of Pseudotsuga menziesii (Douglas-fir).